The following is a 386-amino-acid chain: Lycopene beta-cyclase (386 aa).

3–33 serves as a coordination point for NAD(+); sequence DLILVGGGLANGLIAWRLRQRYPQLNLLLIE.

This sequence belongs to the lycopene cyclase family. It depends on FAD as a cofactor.

It catalyses the reaction a carotenoid psi-end group = a carotenoid beta-end derivative. The catalysed reaction is all-trans-lycopene = gamma-carotene. The enzyme catalyses gamma-carotene = all-trans-beta-carotene. Its pathway is carotenoid biosynthesis; beta-carotene biosynthesis. Its function is as follows. Catalyzes the double cyclization reaction which converts lycopene to beta-carotene. This Pseudescherichia vulneris (Escherichia vulneris) protein is Lycopene beta-cyclase.